A 354-amino-acid polypeptide reads, in one-letter code: Guanine nucleotide-binding protein G(o) subunit alpha (354 aa).

Residue Gly-2 is the site of N-myristoyl glycine attachment. Residue Cys-3 is the site of S-palmitoyl cysteine attachment. One can recognise a G-alpha domain in the interval Lys-32–Tyr-354. A G1 motif region spans residues Lys-35–Thr-48. GTP-binding positions include Gly-40–Ser-47, Leu-176–Thr-182, Asp-201–Gln-205, Asn-270–Asp-273, and Ala-326. Ser-47 and Thr-182 together coordinate Mg(2+). The segment at Asp-174–Thr-182 is G2 motif. The tract at residues Phe-197–Arg-206 is G3 motif. The G4 motif stretch occupies residues Ile-266–Asp-273. Residues Thr-324–Thr-329 form a G5 motif region.

This sequence belongs to the G-alpha family. G(i/o/t/z) subfamily. G proteins are composed of 3 units; alpha, beta and gamma. The alpha chain contains the guanine nucleotide binding site.

Guanine nucleotide-binding proteins (G proteins) are involved as modulators or transducers in various transmembrane signaling systems. The G(o) protein function is not clear. This is Guanine nucleotide-binding protein G(o) subunit alpha from Planorbella trivolvis (Marsh rams-horn).